The following is a 141-amino-acid chain: Large ribosomal subunit protein uL11 (141 aa).

The protein belongs to the universal ribosomal protein uL11 family. As to quaternary structure, part of the ribosomal stalk of the 50S ribosomal subunit. Interacts with L10 and the large rRNA to form the base of the stalk. L10 forms an elongated spine to which L12 dimers bind in a sequential fashion forming a multimeric L10(L12)X complex. Post-translationally, one or more lysine residues are methylated.

Its function is as follows. Forms part of the ribosomal stalk which helps the ribosome interact with GTP-bound translation factors. This is Large ribosomal subunit protein uL11 from Acetivibrio thermocellus (strain ATCC 27405 / DSM 1237 / JCM 9322 / NBRC 103400 / NCIMB 10682 / NRRL B-4536 / VPI 7372) (Clostridium thermocellum).